We begin with the raw amino-acid sequence, 237 residues long: Protein GrpE (237 aa).

2 disordered regions span residues 27–51 and 202–237; these read EDRE…LSET and AVSS…PQHS. 2 stretches are compositionally biased toward low complexity: residues 33-45 and 204-213; these read ASTS…AEAS and SSGSPTSEPS. Residues 227 to 237 are compositionally biased toward polar residues; that stretch reads TPASPQNPQHS.

Belongs to the GrpE family. As to quaternary structure, homodimer.

It is found in the cytoplasm. Functionally, participates actively in the response to hyperosmotic and heat shock by preventing the aggregation of stress-denatured proteins, in association with DnaK and GrpE. It is the nucleotide exchange factor for DnaK and may function as a thermosensor. Unfolded proteins bind initially to DnaJ; upon interaction with the DnaJ-bound protein, DnaK hydrolyzes its bound ATP, resulting in the formation of a stable complex. GrpE releases ADP from DnaK; ATP binding to DnaK triggers the release of the substrate protein, thus completing the reaction cycle. Several rounds of ATP-dependent interactions between DnaJ, DnaK and GrpE are required for fully efficient folding. This Synechococcus sp. (strain JA-3-3Ab) (Cyanobacteria bacterium Yellowstone A-Prime) protein is Protein GrpE.